The following is a 614-amino-acid chain: Laccase 1 (614 aa).

The N-terminal stretch at 1 to 21 (MSRFARLLLMVVALFFTNAWA) is a signal peptide. 2 Plastocyanin-like domains span residues 30–143 (ITWK…IRPK) and 172–360 (YLVV…MRIP). Residue Asn75 is glycosylated (N-linked (GlcNAc...) asparagine). Cu cation is bound by residues His79, His81, His123, and His125. N-linked (GlcNAc...) asparagine glycosylation is found at Asn257, Asn280, Asn445, Asn469, and Asn485. Residues 469–599 (NATRDTENDG…GGMGIAILDG (131 aa)) form the Plastocyanin-like 3 domain. The Cu cation site is built by His507, His510, and His512. Asn527 carries an N-linked (GlcNAc...) asparagine glycan. Cu cation contacts are provided by His581, Cys582, His583, and His587.

This sequence belongs to the multicopper oxidase family. The cofactor is Cu cation.

The protein localises to the cell surface. It functions in the pathway pigment biosynthesis. Its function is as follows. Laccase; part of the Pks1 gene cluster that mediates the biosynthesis of an anthraquinone derivative pigment that contributes to conidial pigmentation that provides protection from UV radiation, heat and cold stress. The polyketide synthase Pks1 produces 1-acetyl-2,4,6,8-tetrahydroxy-9,10-anthraquinone though condensation of acetyl-CoA with malonyl-CoA. The dehydratase EthD and the laccase Mlac1 further convert the anthraquinone derivative into the final conidial pigment. The protein is Laccase 1 of Metarhizium majus (strain ARSEF 297).